The sequence spans 141 residues: MNMEYTLSILKPDVIKRNIIGKVNTYIENSGLKIIAQKTLLLTKVQAENFYIIHKDRAYYQSLVQNMTSGPVVVQVLYGLNAVKKYREIIGATNPCDAKKGTIRGDIAKSIDENTVHGSDSLENADIEIKFFFALIEYAYL.

ATP contacts are provided by Lys11, Tyr59, Arg87, Thr93, Arg104, and Asn114. The Pros-phosphohistidine intermediate role is filled by His117.

This sequence belongs to the NDK family. In terms of assembly, homotetramer. The cofactor is Mg(2+).

The protein localises to the cytoplasm. It catalyses the reaction a 2'-deoxyribonucleoside 5'-diphosphate + ATP = a 2'-deoxyribonucleoside 5'-triphosphate + ADP. The enzyme catalyses a ribonucleoside 5'-diphosphate + ATP = a ribonucleoside 5'-triphosphate + ADP. In terms of biological role, major role in the synthesis of nucleoside triphosphates other than ATP. The ATP gamma phosphate is transferred to the NDP beta phosphate via a ping-pong mechanism, using a phosphorylated active-site intermediate. The sequence is that of Nucleoside diphosphate kinase from Orientia tsutsugamushi (strain Boryong) (Rickettsia tsutsugamushi).